The primary structure comprises 637 residues: Glutamate--cysteine ligase catalytic subunit (637 aa).

M1 bears the N-acetylmethionine mark. Phosphoserine is present on residues S5 and S8.

It belongs to the glutamate--cysteine ligase type 3 family. As to quaternary structure, heterodimer of a catalytic heavy chain and a regulatory light chain.

It catalyses the reaction L-cysteine + L-glutamate + ATP = gamma-L-glutamyl-L-cysteine + ADP + phosphate + H(+). It carries out the reaction (2S)-2-aminobutanoate + L-glutamate + ATP = gamma-L-glutamyl-(2S)-2-aminobutanoate + ADP + phosphate + H(+). The protein operates within sulfur metabolism; glutathione biosynthesis; glutathione from L-cysteine and L-glutamate: step 1/2. With respect to regulation, feedback inhibition by glutathione. Its function is as follows. Catalyzes the ATP-dependent ligation of L-glutamate and L-cysteine and participates in the first and rate-limiting step in glutathione biosynthesis. This chain is Glutamate--cysteine ligase catalytic subunit, found in Homo sapiens (Human).